The primary structure comprises 87 residues: MKTLLLSLVVVTIVCLDLGYTRTCHISTSSTPQTCPKGQDICFRKTQCDKFCSIRGAVIEQGCVATCPEFRSNYRSLLCCRTDNCNP.

An N-terminal signal peptide occupies residues 1–21 (MKTLLLSLVVVTIVCLDLGYT). 5 disulfides stabilise this stretch: cysteine 24-cysteine 42, cysteine 35-cysteine 63, cysteine 48-cysteine 52, cysteine 67-cysteine 79, and cysteine 80-cysteine 85.

Belongs to the three-finger toxin family. Long-chain subfamily. Kappa-neurotoxin sub-subfamily. Homo- and heterodimer; non-covalently linked. In terms of tissue distribution, expressed by the venom gland.

The protein localises to the secreted. Postsynaptic neurotoxin that binds and inhibits neuronal nicotinic acetylcholine receptors (nAChR) with high affinity (IC(50)&lt;100 nM). Is a selective, and slowly reversible antagonist of alpha-3/CHRNA3-containing and some alpha-4/CHRNA4-containing AChRs. The polypeptide is Kappa-6-bungarotoxin (Bungarus multicinctus (Many-banded krait)).